We begin with the raw amino-acid sequence, 433 residues long: ATP-dependent protease ATPase subunit HslU (433 aa).

ATP is bound by residues Val-18, 60–65 (GVGKTE), Asp-246, Glu-311, and Arg-383.

It belongs to the ClpX chaperone family. HslU subfamily. In terms of assembly, a double ring-shaped homohexamer of HslV is capped on each side by a ring-shaped HslU homohexamer. The assembly of the HslU/HslV complex is dependent on binding of ATP.

The protein localises to the cytoplasm. ATPase subunit of a proteasome-like degradation complex; this subunit has chaperone activity. The binding of ATP and its subsequent hydrolysis by HslU are essential for unfolding of protein substrates subsequently hydrolyzed by HslV. HslU recognizes the N-terminal part of its protein substrates and unfolds these before they are guided to HslV for hydrolysis. This is ATP-dependent protease ATPase subunit HslU from Rhodopseudomonas palustris (strain HaA2).